Consider the following 531-residue polypeptide: Plant UBX domain-containing protein 11 (531 aa).

Residue M1 is modified to N-acetylmethionine. Low complexity predominate over residues 160–173 (AVASPSTASSVQPS). 2 disordered regions span residues 160–316 (AVAS…KASD) and 441–531 (ANAS…NDRR). Polar residues-rich tracts occupy residues 174 to 190 (ETKS…NNDG) and 201 to 214 (EPSN…NQPA). A compositionally biased stretch (basic and acidic residues) spans 290–301 (VDTKETMKPKDE). A UBX domain is found at 312–390 (KKASDVHLNI…RLFDRQALVV (79 aa)). 2 stretches are compositionally biased toward polar residues: residues 441-478 (ANAS…GRSN) and 486-496 (TSRIGSNIHTL).

Interacts with CDC48A.

In Arabidopsis thaliana (Mouse-ear cress), this protein is Plant UBX domain-containing protein 11.